Here is a 457-residue protein sequence, read N- to C-terminus: Equilibrative nucleoside transporter 1 (457 aa).

Residues 1–12 (MTTSHQPQDRYK) lie on the Cytoplasmic side of the membrane. The chain crosses the membrane as a helical span at residues 13–29 (AVWLIFFVLGLGTLLPW). Over 30–82 (NFFITATQYFTSRLNTSQNISLVTNQSCESTEALADPSVSLPARSSLSAIFNN) the chain is Extracellular. 3 N-linked (GlcNAc...) asparagine glycosylation sites follow: Asn-44, Asn-48, and Asn-54. Residues 83–107 (VMTLCAMLPLLIFTCLNSFLHQKVS) traverse the membrane as a helical segment. The Cytoplasmic segment spans residues 108–111 (QSLR). Residues 112-130 (ILGSLLAILLVFLVTATLV) form a helical membrane-spanning segment. At 131–138 (KVQMDALS) the chain is on the extracellular side. A helical transmembrane segment spans residues 139–157 (FFIITMIKIVLINSFGAIL). Residues 158–174 (QASLFGLAGVLPANYTA) lie on the Cytoplasmic side of the membrane. The helical transmembrane segment at 175–199 (PIMSGQGLAGFFTSVAMICAVASGS) threads the bilayer. Residues 200-206 (KLSESAF) lie on the Extracellular side of the membrane. Residues 207–227 (GYFITACAVVILAILCYLALP) traverse the membrane as a helical segment. Topologically, residues 228–291 (WMEFYRHYLQ…IKAILKSIWV (64 aa)) are cytoplasmic. Ser-254 carries the phosphoserine modification. The span at 255–266 (EGEEPRGGREES) shows a compositional bias: basic and acidic residues. The segment at 255–275 (EGEEPRGGREESGVPGPNSLP) is disordered. Ser-273 carries the post-translational modification Phosphoserine. A helical membrane pass occupies residues 292–311 (LALSVCFIFTVTIGLFPAVT). The Extracellular segment spans residues 312-323 (AEVESSIAGTSP). A helical transmembrane segment spans residues 324-343 (WKNCYFIPVACFLNFNVFDW). The Cytoplasmic portion of the chain corresponds to 344 to 360 (LGRSLTAICMWPGQDSR). A helical transmembrane segment spans residues 361–379 (WLPVLVACRVVFIPLLMLC). Residues 380-394 (NVKQHHYLPSLFKHD) are Extracellular-facing. Residues 395–414 (VWFITFMAAFAFSNGYLASL) traverse the membrane as a helical segment. The Cytoplasmic segment spans residues 415-432 (CMCFGPKKVKPAEAETAG). The chain crosses the membrane as a helical span at residues 433-453 (NIMSFFLCLGLALGAVLSFLL). The Extracellular portion of the chain corresponds to 454 to 457 (RALV).

This sequence belongs to the SLC29A/ENT transporter (TC 2.A.57) family. As to quaternary structure, identified in a complex with STOM. As to expression, expressed in jejunum, liver and lung. Expressed in testis at the blood-testis barrier (at protein level). Expressed in ventricular myocytes (at protein level). Expressed in kidney.

It localises to the basolateral cell membrane. The protein localises to the apical cell membrane. Its subcellular location is the cell membrane. The catalysed reaction is adenosine(in) = adenosine(out). It carries out the reaction guanosine(in) = guanosine(out). It catalyses the reaction inosine(in) = inosine(out). The enzyme catalyses uridine(out) = uridine(in). The catalysed reaction is thymidine(in) = thymidine(out). It carries out the reaction cytidine(in) = cytidine(out). It catalyses the reaction adenine(out) = adenine(in). The enzyme catalyses guanine(out) = guanine(in). The catalysed reaction is thymine(out) = thymine(in). It carries out the reaction uracil(in) = uracil(out). It catalyses the reaction hypoxanthine(out) = hypoxanthine(in). Its activity is regulated as follows. Transport activity is sensitive to low concentrations of the inhibitor nitrobenzylmercaptopurine riboside (NBMPR). Functionally, uniporter involved in the facilitative transport of nucleosides and nucleobases, and contributes to maintaining their cellular homeostasis. Functions as a Na(+)-independent transporter. Involved in the transport of nucleosides such as adenosine, thymidine and uridine. Also transports purine nucleobases (hypoxanthine, adenine, guanine) and pyrimidine nucleobases (thymine, uracil). Mediates basolateral nucleoside uptake into Sertoli cells, thereby regulating the transport of nucleosides in testis across the blood-testis barrier. Regulates inosine levels in brown adipocytes tissues (BAT) and extracellular inosine levels, which controls BAT-dependent energy expenditure. This chain is Equilibrative nucleoside transporter 1, found in Rattus norvegicus (Rat).